The chain runs to 499 residues: Probable cytosol aminopeptidase (499 aa).

Positions 269 and 274 each coordinate Mn(2+). The active site involves K281. 3 residues coordinate Mn(2+): D292, D351, and E353. R355 is an active-site residue.

The protein belongs to the peptidase M17 family. Mn(2+) is required as a cofactor.

It localises to the cytoplasm. The catalysed reaction is Release of an N-terminal amino acid, Xaa-|-Yaa-, in which Xaa is preferably Leu, but may be other amino acids including Pro although not Arg or Lys, and Yaa may be Pro. Amino acid amides and methyl esters are also readily hydrolyzed, but rates on arylamides are exceedingly low.. It carries out the reaction Release of an N-terminal amino acid, preferentially leucine, but not glutamic or aspartic acids.. Presumably involved in the processing and regular turnover of intracellular proteins. Catalyzes the removal of unsubstituted N-terminal amino acids from various peptides. This is Probable cytosol aminopeptidase from Actinobacillus pleuropneumoniae serotype 3 (strain JL03).